A 455-amino-acid chain; its full sequence is Golgi pH regulator (455 aa).

The next 5 membrane-spanning stretches (helical) occupy residues 5–25, 46–66, 79–99, 114–134, and 150–170; these read IDSS…WLFF, VTFA…LGVL, LCVI…YFIV, CLLW…FPIL, and VGVI…VNCP. N-linked (GlcNAc...) asparagine glycosylation is found at N180 and N243. The next 4 helical transmembrane spans lie at 290–310, 343–363, 378–398, and 425–445; these read GYFF…NIVL, ISFI…LITL, VIVL…VLLI, and WFDV…YLAH.

The protein belongs to the Golgi pH regulator (TC 1.A.38) family. Homotrimer. Interacts with RABL3; the interaction stabilizes GPR89B.

It localises to the golgi apparatus membrane. It carries out the reaction iodide(out) = iodide(in). The catalysed reaction is chloride(in) = chloride(out). It catalyses the reaction bromide(in) = bromide(out). The enzyme catalyses fluoride(in) = fluoride(out). Its function is as follows. Voltage-gated channel that enables the transfer of anions such as iodide, chloride, bromide and fluoride which may function in counter-ion conductance and participates in Golgi acidification. Plays a role in lymphocyte development, probably by acting as a RABL3 effector in hematopoietic cells. This Cricetulus griseus (Chinese hamster) protein is Golgi pH regulator.